A 227-amino-acid chain; its full sequence is ATP synthase F(0) complex subunit a (227 aa).

Transmembrane regions (helical) follow at residues 12-32 (PTYL…ILFP), 69-89 (WAVL…LGLL), 98-118 (QLSL…IIGM), 132-152 (EGTP…SLFI), 180-200 (FVLM…LFLL), and 202-222 (LLEI…LSLY).

This sequence belongs to the ATPase A chain family. Component of the ATP synthase complex composed at least of ATP5F1A/subunit alpha, ATP5F1B/subunit beta, ATP5MC1/subunit c (homooctomer), MT-ATP6/subunit a, MT-ATP8/subunit 8, ATP5ME/subunit e, ATP5MF/subunit f, ATP5MG/subunit g, ATP5MK/subunit k, ATP5MJ/subunit j, ATP5F1C/subunit gamma, ATP5F1D/subunit delta, ATP5F1E/subunit epsilon, ATP5PF/subunit F6, ATP5PB/subunit b, ATP5PD/subunit d, ATP5PO/subunit OSCP. ATP synthase complex consists of a soluble F(1) head domain (subunits alpha(3) and beta(3)) - the catalytic core - and a membrane F(0) domain - the membrane proton channel (subunits c, a, 8, e, f, g, k and j). These two domains are linked by a central stalk (subunits gamma, delta, and epsilon) rotating inside the F1 region and a stationary peripheral stalk (subunits F6, b, d, and OSCP). Interacts with DNAJC30; interaction is direct.

Its subcellular location is the mitochondrion inner membrane. The enzyme catalyses H(+)(in) = H(+)(out). Functionally, subunit a, of the mitochondrial membrane ATP synthase complex (F(1)F(0) ATP synthase or Complex V) that produces ATP from ADP in the presence of a proton gradient across the membrane which is generated by electron transport complexes of the respiratory chain. ATP synthase complex consist of a soluble F(1) head domain - the catalytic core - and a membrane F(1) domain - the membrane proton channel. These two domains are linked by a central stalk rotating inside the F(1) region and a stationary peripheral stalk. During catalysis, ATP synthesis in the catalytic domain of F(1) is coupled via a rotary mechanism of the central stalk subunits to proton translocation. With the subunit c (ATP5MC1), forms the proton-conducting channel in the F(0) domain, that contains two crucial half-channels (inlet and outlet) that facilitate proton movement from the mitochondrial intermembrane space (IMS) into the matrix. Protons are taken up via the inlet half-channel and released through the outlet half-channel, following a Grotthuss mechanism. In Salmo salar (Atlantic salmon), this protein is ATP synthase F(0) complex subunit a.